A 375-amino-acid polypeptide reads, in one-letter code: Tyrosine--tRNA ligase (375 aa).

Positions 37, 168, 172, 175, and 190 each coordinate L-tyrosine. Positions 251–255 (KMSKS) match the 'KMSKS' region motif. Residue K254 coordinates ATP.

Belongs to the class-I aminoacyl-tRNA synthetase family. TyrS type 4 subfamily. In terms of assembly, homodimer.

It is found in the cytoplasm. The enzyme catalyses tRNA(Tyr) + L-tyrosine + ATP = L-tyrosyl-tRNA(Tyr) + AMP + diphosphate + H(+). In terms of biological role, catalyzes the attachment of tyrosine to tRNA(Tyr) in a two-step reaction: tyrosine is first activated by ATP to form Tyr-AMP and then transferred to the acceptor end of tRNA(Tyr). This Thermococcus kodakarensis (strain ATCC BAA-918 / JCM 12380 / KOD1) (Pyrococcus kodakaraensis (strain KOD1)) protein is Tyrosine--tRNA ligase.